A 734-amino-acid polypeptide reads, in one-letter code: Terpene cyclase/mutase ntnI (734 aa).

A compositionally biased stretch (polar residues) spans Met1–Ala12. The segment at Met1 to Thr26 is disordered. Over residues Leu16 to Thr26 the composition is skewed to basic and acidic residues. 4 PFTB repeats span residues Ala130 to Gly172, Leu493 to Thr534, Arg570 to Gly610, and Ser619 to His668.

Belongs to the terpene cyclase/mutase family.

The protein operates within secondary metabolite biosynthesis; terpenoid biosynthesis. In terms of biological role, terpene cyclase/mutase; part of the gene cluster that mediates the biosynthesis of the meroterpenoids nectripenoids A and B, as well as cochliquninone D and isocochliquninone E. The pathway probably begins with the HR-PKS ntnH that catalyzes two chain-extension steps to form a reduced triketide, which then primes the SAT domain in the NR-PKS ntnG to initiate three more cycles of extension to give a linear hexaketide corresponding to the polyketide part of nectripenoids. The FAD-dependent monooxygenase ntnJ then performs an oxidative decarboxylation at C11 of the ntnH/ntnG product, via an electrophilic aromatic hydroxylation with concomitant ipso-decarboxylation. The membrane-bound polyprenyl transferase ntnF then introduces a farnesyl group before the FAD-dependent monooxygenase ntnK functions as the first epoxidase on terminal C12'-C13' olefin, followed by a second epoxidation on C7'-C8' catalyzed by ntnA. The terpene cyclase/mutase ntnI then initiates the sequential tricyclic ring formation through protonation of the terminal epoxide and catalyzes the regioselective and stereoselective 6/6/6-tricyclic ring formation. The cytochrome P450 monooxygenase ntnM may then hydroxylate C1'. The chain is Terpene cyclase/mutase ntnI from Nectria sp.